Reading from the N-terminus, the 586-residue chain is 2-succinyl-5-enolpyruvyl-6-hydroxy-3-cyclohexene-1-carboxylate synthase (586 aa).

The protein belongs to the TPP enzyme family. MenD subfamily. As to quaternary structure, homodimer. It depends on Mg(2+) as a cofactor. The cofactor is Mn(2+). Thiamine diphosphate is required as a cofactor.

It catalyses the reaction isochorismate + 2-oxoglutarate + H(+) = 5-enolpyruvoyl-6-hydroxy-2-succinyl-cyclohex-3-ene-1-carboxylate + CO2. The protein operates within quinol/quinone metabolism; 1,4-dihydroxy-2-naphthoate biosynthesis; 1,4-dihydroxy-2-naphthoate from chorismate: step 2/7. Its pathway is quinol/quinone metabolism; menaquinone biosynthesis. Catalyzes the thiamine diphosphate-dependent decarboxylation of 2-oxoglutarate and the subsequent addition of the resulting succinic semialdehyde-thiamine pyrophosphate anion to isochorismate to yield 2-succinyl-5-enolpyruvyl-6-hydroxy-3-cyclohexene-1-carboxylate (SEPHCHC). This Natronomonas pharaonis (strain ATCC 35678 / DSM 2160 / CIP 103997 / JCM 8858 / NBRC 14720 / NCIMB 2260 / Gabara) (Halobacterium pharaonis) protein is 2-succinyl-5-enolpyruvyl-6-hydroxy-3-cyclohexene-1-carboxylate synthase.